The sequence spans 323 residues: Methionyl-tRNA formyltransferase (323 aa).

A (6S)-5,6,7,8-tetrahydrofolate-binding site is contributed by 115 to 118 (SLLP).

Belongs to the Fmt family.

It carries out the reaction L-methionyl-tRNA(fMet) + (6R)-10-formyltetrahydrofolate = N-formyl-L-methionyl-tRNA(fMet) + (6S)-5,6,7,8-tetrahydrofolate + H(+). Functionally, attaches a formyl group to the free amino group of methionyl-tRNA(fMet). The formyl group appears to play a dual role in the initiator identity of N-formylmethionyl-tRNA by promoting its recognition by IF2 and preventing the misappropriation of this tRNA by the elongation apparatus. This Lactococcus lactis subsp. cremoris (strain SK11) protein is Methionyl-tRNA formyltransferase.